The following is a 40-amino-acid chain: AEAMAEAMADAMADAMADAMADAMAEAAADPPPGFIGVRG.

Positions Ala1–Ala3 are cleaved as a signal peptide. The propeptide occupies Met4–Ala29. Arginine amide is present on Arg39.

This sequence belongs to the formicidae venom precursor-01 superfamily. As to expression, expressed by the venom gland.

The protein localises to the secreted. In terms of biological role, venom protein with unknown function. Does not induce paralysis when a high dose is administered by intrathoracic injection into the blowfly Lucilia caesar. The polypeptide is U2-myrmicitoxin-Tb1a (Tetramorium bicarinatum (Tramp ant)).